The primary structure comprises 174 residues: Alpha-crystallin B chain (174 aa).

At methionine 1 the chain carries N-acetylmethionine. The sHSP domain maps to 55–163; the sequence is RMPSWLETGL…PERSIPITRE (109 aa). Residues histidine 82, histidine 103, glutamate 105, and histidine 110 each coordinate Zn(2+). The disordered stretch occupies residues 148 to 174; it reads RKQSDVPERSIPITREEKPAIAGAQRK. A compositionally biased stretch (basic and acidic residues) spans 149-166; it reads KQSDVPERSIPITREEKP.

This sequence belongs to the small heat shock protein (HSP20) family. As to quaternary structure, heteromer composed of three CRYAA and one CRYAB subunits. Aggregates with homologous proteins, including the small heat shock protein HSPB1, to form large heteromeric complexes. Inter-subunit bridging via zinc ions enhances stability, which is crucial as there is no protein turn over in the lens. As to expression, lens as well as other tissues.

May contribute to the transparency and refractive index of the lens. The protein is Alpha-crystallin B chain (CRYAB) of Anas platyrhynchos (Mallard).